The chain runs to 1058 residues: Protein translocase subunit SECA2, chloroplastic (1058 aa).

A chloroplast-targeting transit peptide spans 1-58 (MGSVSNLVSPNICHPAPPCLTSRSNKFPWTKPISGLLFYRSVTPIKRCHLVRRSCVVS). ATP is bound at residue 167–174 (MKTGEGKT).

The protein belongs to the SecA family. Part of a second Sec protein translocation apparatus. Interacts probably with SCY2.

Its subcellular location is the plastid. The protein resides in the chloroplast membrane. It carries out the reaction ATP + H2O + chloroplast-proteinSide 1 = ADP + phosphate + chloroplast-proteinSide 2.. Its function is as follows. Involved in protein export. Probably interacts with other proteins to allow the postimport or conservative sorting pathway for inner membrane proteins in plastids. May have a central role in coupling the hydrolysis of ATP to the transfer of proteins across the membrane. The sequence is that of Protein translocase subunit SECA2, chloroplastic from Arabidopsis thaliana (Mouse-ear cress).